A 1186-amino-acid chain; its full sequence is Chromosome partition protein Smc (1186 aa).

32–39 lines the ATP pocket; that stretch reads PNGSGKSN. Coiled coils occupy residues 167–206 and 259–481; these read VLKY…EPLK and SSAI…QAYQ. Residues 519 to 637 form the SMC hinge domain; it reads GIRGAVLELI…EDLKGANELA (119 aa). Coiled coils occupy residues 672–864, 893–943, and 990–1029; these read LLGR…MSSS, RDQR…NLLQ, and SIDE…DEEM.

It belongs to the SMC family. In terms of assembly, homodimer.

Its subcellular location is the cytoplasm. Its function is as follows. Required for chromosome condensation and partitioning. This chain is Chromosome partition protein Smc, found in Bacillus subtilis (strain 168).